The primary structure comprises 331 residues: Gamma-parvin (331 aa).

Met-1 is modified (N-acetylmethionine). The disordered stretch occupies residues Glu-17–Lys-39. 2 consecutive Calponin-homology (CH) domains span residues Glu-44–Gln-151 and Asn-210–Thr-317.

This sequence belongs to the parvin family. Interacts with ILK; the interaction promotes the establishment of cell polarity required for leukocyte migration. Interacts with ARHGEF6; the guanine nucleotide exchange factor activity of ARHGEF6 is essential for the PARVG-induced enhancement of cell spreading. As to expression, expressed predominantly in lymphoid organs, including spleen, thymus, lymph node, bone marrow and peripheral blood leukocytes and moderately in the digestive tract, including stomach, duodenum, jejunum, ileum, ileocecum and appendix, as well as in lung and liver. Also expressed in tumors, but at a lower level than in the corresponding normal tissues.

The protein resides in the cell junction. The protein localises to the focal adhesion. It is found in the cell membrane. Its subcellular location is the cytoplasm. It localises to the cytoskeleton. Its function is as follows. Plays a role with ILK in promoting the cell adhesion and spreading of leukocytes. This Homo sapiens (Human) protein is Gamma-parvin (PARVG).